A 2067-amino-acid polypeptide reads, in one-letter code: Dedicator of cytokinesis protein 11 (2067 aa).

The PH domain maps to 162-269 (GVMKQGWLQK…WVNTIKQALL (108 aa)). The segment at 274 to 302 (DRRNGSETSEGSLDDDSSSQGKPESITES) is disordered. The segment covering 291–302 (SSQGKPESITES) has biased composition (polar residues). Residues 643 to 820 (NNHLYIYPQQ…PLFKVRAYVA (178 aa)) enclose the C2 DOCK-type domain. Positions 1224–1267 (SSTIVDKEPSGSVTQNGLSRRGESRGSMYGDPGTPDINELHRRG) are disordered. Residues 1614–2040 (RSYASTPELR…LSEIIHEQIF (427 aa)) form the DOCKER domain.

Belongs to the DOCK family.

Functionally, guanine nucleotide-exchange factor (GEF) that activates CDC42 by exchanging bound GDP for free GTP. This is Dedicator of cytokinesis protein 11 from Danio rerio (Zebrafish).